The primary structure comprises 299 residues: Oxygen-dependent coproporphyrinogen-III oxidase (299 aa).

Position 92 (Ser92) interacts with substrate. A divalent metal cation is bound by residues His96 and His106. The active-site Proton donor is the His106. 108–110 (NVR) is a binding site for substrate. A divalent metal cation-binding residues include His145 and His175. The interval 239 to 274 (YVEFNLVYDRGTLFGLQSGGRAESILMSLPPQVRWE) is important for dimerization. 257-259 (GGR) provides a ligand contact to substrate.

Belongs to the aerobic coproporphyrinogen-III oxidase family. As to quaternary structure, homodimer. A divalent metal cation serves as cofactor.

The protein resides in the cytoplasm. The enzyme catalyses coproporphyrinogen III + O2 + 2 H(+) = protoporphyrinogen IX + 2 CO2 + 2 H2O. The protein operates within porphyrin-containing compound metabolism; protoporphyrin-IX biosynthesis; protoporphyrinogen-IX from coproporphyrinogen-III (O2 route): step 1/1. Its function is as follows. Involved in the heme biosynthesis. Catalyzes the aerobic oxidative decarboxylation of propionate groups of rings A and B of coproporphyrinogen-III to yield the vinyl groups in protoporphyrinogen-IX. The protein is Oxygen-dependent coproporphyrinogen-III oxidase of Xanthomonas campestris pv. campestris (strain B100).